The chain runs to 130 residues: MARRTTTRVKRREKKNIEHGIAHIKSTFNNTIISITDRHGNAISWSSAGTIGFKGSRKSTPFAAQQAAENAAKAAMEHGLKEVECYVKGPGAGREAAIRSLQAAGLEVSVIKDVTPIPHNGCRPPKRRRV.

The protein belongs to the universal ribosomal protein uS11 family. In terms of assembly, part of the 30S ribosomal subunit. Interacts with proteins S7 and S18. Binds to IF-3.

Functionally, located on the platform of the 30S subunit, it bridges several disparate RNA helices of the 16S rRNA. Forms part of the Shine-Dalgarno cleft in the 70S ribosome. This chain is Small ribosomal subunit protein uS11, found in Syntrophomonas wolfei subsp. wolfei (strain DSM 2245B / Goettingen).